A 258-amino-acid polypeptide reads, in one-letter code: Global transcriptional regulator CodY (258 aa).

The tract at residues 1–156 (MSTLLDKTRK…SATIVGLEIL (156 aa)) is GAF domain. The segment at residues 204 to 223 (ASKIADKVGITRSVIVNALR) is a DNA-binding region (H-T-H motif).

The protein belongs to the CodY family.

The protein resides in the cytoplasm. Its function is as follows. DNA-binding global transcriptional regulator which is involved in the adaptive response to starvation and acts by directly or indirectly controlling the expression of numerous genes in response to nutrient availability. During rapid exponential growth, CodY is highly active and represses genes whose products allow adaptation to nutrient depletion. In Clostridium kluyveri (strain NBRC 12016), this protein is Global transcriptional regulator CodY.